The chain runs to 301 residues: MRIAILSRGPALYSTRRLKEAAELRGHEVHIIDTLHCYMDITSSKPAVRYDGEELPYFDAVIPRIGASITFYGTSVVRQFEMMGTFVVNESVAISRSRDKLRSLQLLSRKGIGLPRTGFANKPDNIKDLIRNVGGAPVVIKLLEGTQGIGVVLAETPKTAEAMIEAFMGLKANILVQEFIKEAGGADIRCLVVGGRVIAAMKRQGAEGEFRSNLHRGGSAELVRLTKEERATAVNAAKIMGLNVCGVDVLRATRGPVVMEVNSSPGLEGIEYATGKDVAGMIVEFIEKNARPHRTKTRGKG.

An ATP-grasp domain is found at 104-287; that stretch reads LQLLSRKGIG…VAGMIVEFIE (184 aa). ATP-binding positions include Lys141, 178 to 179, Asp187, and 211 to 213; these read EF and RSN. Asp248, Glu260, and Asn262 together coordinate Mg(2+). 3 residues coordinate Mn(2+): Asp248, Glu260, and Asn262.

It belongs to the RimK family. The cofactor is Mg(2+). Mn(2+) serves as cofactor.

The protein is Probable alpha-L-glutamate ligase of Teredinibacter turnerae (strain ATCC 39867 / T7901).